A 342-amino-acid chain; its full sequence is Probable transposase for insertion-like sequence element IS1161 (342 aa).

The Integrase catalytic domain maps to 182-342; sequence IEERPEEINN…KKLFELTQTA (161 aa).

This sequence belongs to the transposase IS30 family.

Its function is as follows. Required for the transposition of the insertion element. The polypeptide is Probable transposase for insertion-like sequence element IS1161 (Streptococcus salivarius).